We begin with the raw amino-acid sequence, 400 residues long: Phosphoglycerate kinase (400 aa).

Substrate is bound by residues 24-26, arginine 40, 63-66, arginine 121, and arginine 154; these read DFN and HFGR. ATP is bound by residues lysine 205, glycine 296, glutamate 327, and 356–359; that span reads GGDS.

It belongs to the phosphoglycerate kinase family. Monomer.

It is found in the cytoplasm. It carries out the reaction (2R)-3-phosphoglycerate + ATP = (2R)-3-phospho-glyceroyl phosphate + ADP. It functions in the pathway carbohydrate degradation; glycolysis; pyruvate from D-glyceraldehyde 3-phosphate: step 2/5. This is Phosphoglycerate kinase from Nostoc punctiforme (strain ATCC 29133 / PCC 73102).